The sequence spans 432 residues: Histidine--tRNA ligase (432 aa).

Belongs to the class-II aminoacyl-tRNA synthetase family.

Its subcellular location is the cytoplasm. It catalyses the reaction tRNA(His) + L-histidine + ATP = L-histidyl-tRNA(His) + AMP + diphosphate + H(+). In Halobacterium salinarum (strain ATCC 29341 / DSM 671 / R1), this protein is Histidine--tRNA ligase.